Here is a 656-residue protein sequence, read N- to C-terminus: MNNVHIIKPLSLPQRFFSCIFHPLLLIFFTSVILTIWGSFSVIDITMAKMSHAQVKRNDTVSTFASISTATATATTTATTTATMTAVTTQHAIYSANSYSLNKTFIDNTIDQYFESKLRSIESTVGTDMQEKFKSYTDDILDNKQKLINDQISLETELIKEVLEVNNTIFNELLTKSQLINDTWNEISEDAMTIDKDSISQMASNLLLNYSMFDSIFGNYSRKLKSLQNFNGTITDFSTQLDTSSTLSLNFLRNSTDWLQLKRNFTANLQNEISILSGGSTEVTSSTSIIKRSLKTNSEENSVLSAVKNHVFRKCKRMTIIFTVMYFAFVILLMAIERILFQLENQQVNLVMSQINGLTGQTNFTKYNKVLKSLITTLNLSTLYPIPYQLTKLINQKIFKREPEKIDDKKVKKSKLFYCNWWIISNGAHLWLFGFLMLLIHWQIVTRLTNFEVPSLPTFHKRAGPSLYKREVWTDGNITTTIEGFINDSVSLLCENFQMEVNEKFITANLSLQTDPNLKVQSTDILNLWVNDTNTQFEKYLNESSQNWQGIDLQVEPLLGSDSINEFLGQYFLPTYEVTNTNSSFALDIQKYGIINRGINITNASVAALSSLSKRQIKDKEQKQTYFLHTVYKWGLLAVCLTILFHHMLIFIILKL.

The next 4 membrane-spanning stretches (helical) occupy residues 16-36 (FFSC…ILTI), 320-340 (IIFT…ERIL), 422-442 (WIIS…LIHW), and 634-654 (WGLL…FIIL).

The protein localises to the membrane. This chain is Pheromone-regulated membrane protein 2 (PRM2), found in Saccharomyces cerevisiae (strain ATCC 204508 / S288c) (Baker's yeast).